A 298-amino-acid polypeptide reads, in one-letter code: Zinc import ATP-binding protein ZnuC (298 aa).

The 216-residue stretch at 17–232 (IELRNAGVYR…PEYVRLFGSR (216 aa)) folds into the ABC transporter domain. An ATP-binding site is contributed by 49 to 56 (GPNGAGKS). A disordered region spans residues 273–298 (RGHCHVEDGHHHDHEHHHHEGGQPRA). Residues 276–298 (CHVEDGHHHDHEHHHHEGGQPRA) show a composition bias toward basic and acidic residues.

It belongs to the ABC transporter superfamily. Zinc importer (TC 3.A.1.15.5) family. The complex is composed of two ATP-binding proteins (ZnuC), two transmembrane proteins (ZnuB) and a solute-binding protein (ZnuA).

It is found in the cell inner membrane. The catalysed reaction is Zn(2+)(out) + ATP(in) + H2O(in) = Zn(2+)(in) + ADP(in) + phosphate(in) + H(+)(in). In terms of biological role, part of the ABC transporter complex ZnuABC involved in zinc import. Responsible for energy coupling to the transport system. This is Zinc import ATP-binding protein ZnuC from Brucella suis biovar 1 (strain 1330).